Here is a 515-residue protein sequence, read N- to C-terminus: Membrane-bound transcription factor site-2 protease (515 aa).

Topologically, residues 1 to 3 (MIP) are cytoplasmic. Residues 4–24 (VSLLVVVVGGWTAVYLADLVL) form a helical membrane-spanning segment. The Lumenal portion of the chain corresponds to 25–74 (KSSVYFKHSYEDWLENNGLSISPFHIRWQTSIFNRAFYSWGRRKARMLYQ). Transmembrane regions (helical) follow at residues 75–95 (WFNF…FLLG) and 96–107 (KTLMQTLAQMMA). The Lumenal segment spans residues 108 to 140 (DSPSPYSSSSSSSSSSSSSSSSSSSLHNEQVLQ). Residues 141–165 (VVVPGINLPVNQLTYFFAAVLISGV) form a helical membrane-spanning segment. Histidine 167 contributes to the Zn(2+) binding site. Residue glutamate 168 is part of the active site. A run of 3 helical transmembrane segments spans residues 170–182 (GHGI…QVRF), 183–205 (NGFG…TTHL), and 225–247 (FVLA…PFYY). Histidine 171 contributes to the Zn(2+) binding site. Residues 248-442 (TGVGVLITEV…LPVIVETFVK (195 aa)) are Lumenal-facing. An N-linked (GlcNAc...) asparagine glycan is attached at asparagine 333. The next 2 helical transmembrane spans lie at 443–460 (YLIS…VPCF) and 461–472 (ALDGQWILNSFL). At 473–488 (DATLTSVIGDNDVKDL) the chain is on the lumenal side. The helical transmembrane segment at 489-509 (IGFFILLGGSVLLAANVTLGL) threads the bilayer. The Cytoplasmic portion of the chain corresponds to 510–515 (WMVTAR).

The protein belongs to the peptidase M50A family. The cofactor is Zn(2+).

It is found in the membrane. It localises to the cytoplasm. The protein resides in the golgi apparatus membrane. It catalyses the reaction Cleaves several transcription factors that are type-2 transmembrane proteins within membrane-spanning domains. Known substrates include sterol regulatory element-binding protein (SREBP) -1, SREBP-2 and forms of the transcriptional activator ATF6. SREBP-2 is cleaved at the site 477-DRSRILL-|-CVLTFLCLSFNPLTSLLQWGGA-505. The residues Asn-Pro, 11 residues distal to the site of cleavage in the membrane-spanning domain, are important for cleavage by S2P endopeptidase. Replacement of either of these residues does not prevent cleavage, but there is no cleavage if both of these residues are replaced.. Its function is as follows. Zinc metalloprotease that mediates intramembrane proteolysis of proteins such as ATF6, ATF6B, SREBF1/SREBP1 and SREBF2/SREBP2. Catalyzes the second step in the proteolytic activation of the sterol regulatory element-binding proteins (SREBPs) SREBF1/SREBP1 and SREBF2/SREBP2: cleaves SREBPs within the first transmembrane segment, thereby releasing the N-terminal segment with a portion of the transmembrane segment attached. Mature N-terminal SREBP fragments shuttle to the nucleus and activate gene transcription. Also mediates the second step in the proteolytic activation of the cyclic AMP-dependent transcription factor ATF-6 (ATF6 and ATF6B). Involved in intramembrane proteolysis during bone formation. In astrocytes and osteoblasts, upon DNA damage and ER stress, mediates the second step of the regulated intramembrane proteolytic activation of the transcription factor CREB3L1, leading to the inhibition of cell-cycle progression. This is Membrane-bound transcription factor site-2 protease (Mbtps2) from Mus musculus (Mouse).